The sequence spans 224 residues: MADEDITLNEDQLLESLEETNGEQETEIATEVEEEGSMQIDPELEAIKARVKEMEEEAEKIKQMQSEVDKQMAGGSTTGLATVPLSLEEKQEIDTRSVYVGNVDYGASAEELEAHFHGCGTINRVTILCNKADGHPKGFAYIEFGSKEFVETALAMNETLFRGRQIKVMSKRTNRPGLSTTNRFARGSFRGRGARVSRACCHSTFRGARRAMGYRGRANYYAPY.

Residues 1–36 (MADEDITLNEDQLLESLEETNGEQETEIATEVEEEG) show a composition bias toward acidic residues. Positions 1-40 (MADEDITLNEDQLLESLEETNGEQETEIATEVEEEGSMQI) are disordered. The stretch at 9 to 74 (NEDQLLESLE…QSEVDKQMAG (66 aa)) forms a coiled coil. Residues 96–173 (RSVYVGNVDY…RQIKVMSKRT (78 aa)) enclose the RRM domain.

Interacts with ZC3H3. In terms of tissue distribution, expressed ubiquitously in all transcriptionally active cells.

The protein resides in the nucleus. Its subcellular location is the cytoplasm. Involved in the 3'-end formation of mRNA precursors (pre-mRNA) by the addition of a poly(A) tail of 200-250 nt to the upstream cleavage product. Stimulates poly(A) polymerase (PAPOLA) conferring processivity on the poly(A) tail elongation reaction and also controls the poly(A) tail length. Increases the affinity of poly(A) polymerase for RNA. Binds to poly(A) and to poly(G) with high affinity. May protect the poly(A) tail from degradation. Plays a role in the positive regulation of alpha-1,3 fucosylation, possibly by cooperating with swm which regulates nuclear export of fucosyltransferase FucTA. Involved in germline stem cell transit amplification, differentiation and mitosis-to-meiosis transition. The protein is Polyadenylate-binding protein 2 of Drosophila melanogaster (Fruit fly).